Consider the following 401-residue polypeptide: Coenzyme A biosynthesis bifunctional protein CoaBC (401 aa).

The segment at 1–190 (MQTLAGKKIL…FQPKPLQDKS (190 aa)) is phosphopantothenoylcysteine decarboxylase. The active-site Proton donor is the Cys-159. Residues 191-401 (ILITAGPTRE…LKQIQTLMGH (211 aa)) form a phosphopantothenate--cysteine ligase region. Residues Asp-279, Lys-289, 307–310 (PDIV), Phe-326, Lys-340, and Lys-344 contribute to the CTP site.

The protein in the N-terminal section; belongs to the HFCD (homo-oligomeric flavin containing Cys decarboxylase) superfamily. This sequence in the C-terminal section; belongs to the PPC synthetase family. Mg(2+) serves as cofactor. Requires FMN as cofactor.

The catalysed reaction is N-[(R)-4-phosphopantothenoyl]-L-cysteine + H(+) = (R)-4'-phosphopantetheine + CO2. It carries out the reaction (R)-4'-phosphopantothenate + L-cysteine + CTP = N-[(R)-4-phosphopantothenoyl]-L-cysteine + CMP + diphosphate + H(+). It functions in the pathway cofactor biosynthesis; coenzyme A biosynthesis; CoA from (R)-pantothenate: step 2/5. It participates in cofactor biosynthesis; coenzyme A biosynthesis; CoA from (R)-pantothenate: step 3/5. Its function is as follows. Catalyzes two sequential steps in the biosynthesis of coenzyme A. In the first step cysteine is conjugated to 4'-phosphopantothenate to form 4-phosphopantothenoylcysteine. In the second step the latter compound is decarboxylated to form 4'-phosphopantotheine. In Vibrio vulnificus (strain CMCP6), this protein is Coenzyme A biosynthesis bifunctional protein CoaBC.